Consider the following 472-residue polypeptide: Serine/threonine-protein kinase sax-1 (472 aa).

A Protein kinase domain is found at 87 to 381 (FESLKVIGRG…LDEIKQCPFF (295 aa)). Residues 93-101 (IGRGAFGEV) and K116 contribute to the ATP site. The active-site Proton acceptor is the D210. The AGC-kinase C-terminal domain maps to 382 to 452 (RRIDWNHIRE…KRFDGLTQKM (71 aa)).

Belongs to the protein kinase superfamily. AGC Ser/Thr protein kinase family. It depends on Mg(2+) as a cofactor.

The protein localises to the cytoplasm. The protein resides in the nucleus. The catalysed reaction is L-seryl-[protein] + ATP = O-phospho-L-seryl-[protein] + ADP + H(+). The enzyme catalyses L-threonyl-[protein] + ATP = O-phospho-L-threonyl-[protein] + ADP + H(+). Acts with sax-2 to restrict the growth of both primary and secondary neurites. Regulates mechanosensory tiling by controlling the termination point of sensory dendrites. This is Serine/threonine-protein kinase sax-1 from Caenorhabditis briggsae.